Here is a 209-residue protein sequence, read N- to C-terminus: Small ribosomal subunit protein uS4 (209 aa).

Residues 98-159 (RRLDSAVYRL…KSRKITRIND (62 aa)) enclose the S4 RNA-binding domain.

Belongs to the universal ribosomal protein uS4 family. As to quaternary structure, part of the 30S ribosomal subunit. Contacts protein S5. The interaction surface between S4 and S5 is involved in control of translational fidelity.

Functionally, one of the primary rRNA binding proteins, it binds directly to 16S rRNA where it nucleates assembly of the body of the 30S subunit. Its function is as follows. With S5 and S12 plays an important role in translational accuracy. This Syntrophotalea carbinolica (strain DSM 2380 / NBRC 103641 / GraBd1) (Pelobacter carbinolicus) protein is Small ribosomal subunit protein uS4.